A 145-amino-acid chain; its full sequence is 3-hydroxyacyl-[acyl-carrier-protein] dehydratase FabZ (145 aa).

The active site involves His49.

Belongs to the thioester dehydratase family. FabZ subfamily.

It localises to the cytoplasm. The catalysed reaction is a (3R)-hydroxyacyl-[ACP] = a (2E)-enoyl-[ACP] + H2O. In terms of biological role, involved in unsaturated fatty acids biosynthesis. Catalyzes the dehydration of short chain beta-hydroxyacyl-ACPs and long chain saturated and unsaturated beta-hydroxyacyl-ACPs. This chain is 3-hydroxyacyl-[acyl-carrier-protein] dehydratase FabZ, found in Rickettsia conorii (strain ATCC VR-613 / Malish 7).